The following is a 497-amino-acid chain: Arginine/ornithine antiporter ArcD2 (497 aa).

13 consecutive transmembrane segments (helical) span residues 8 to 28, 41 to 61, 88 to 108, 127 to 147, 160 to 180, 220 to 240, 255 to 275, 297 to 317, 354 to 374, 378 to 398, 406 to 426, 429 to 449, and 462 to 482; these read GISLFALLAIIISGAIGGGVF, GGVVISWLFIGFGILMLVLSF, FLSGWGYWISAWTGTIGFAVL, SLTILSVIIVSIISWILMLLV, IVMIAKLIPLVVFSITGIILF, IKGSLMVMVWVFVGIEGATMM, VIGLAVLLVIYVLLSLLPYGY, VGGWGGSLMAVGLMISLLGAW, LLITQLMIQIFIIITYFVANA, FIYMATAVIMICYALVGAYLF, SVKNILIGFFTFAFQALALYL, WQYVWLAMILYTIGFLLFIGA, and WLGMLVVTVLGVLAIVVLICG.

This sequence belongs to the amino acid-polyamine-organocation (APC) superfamily. Basic amino acid/polyamine antiporter (APA) (TC 2.A.3.2) family.

It is found in the cell membrane. It carries out the reaction L-ornithine(in) + L-arginine(out) = L-ornithine(out) + L-arginine(in). In terms of biological role, catalyzes electroneutral exchange between L-arginine and L-ornithine. Can also efficiently translocate L-alanine. May function in vivo as a L-arginine/L-alanine exchanger in a pathway together with the arcT gene, which is found adjacent to the arcD2 gene in the ADI gene cluster. The protein is Arginine/ornithine antiporter ArcD2 of Lactococcus lactis subsp. cremoris (strain MG1363).